The primary structure comprises 733 residues: Non-secreted LysM effector LCP1 (733 aa).

Residues 1–22 (MMRRPWLLSALVAWVKLPSVQG) form the signal peptide. LysM domains follow at residues 211-256 (SEYT…KLCI) and 261-309 (DVYV…TICI). 9 N-linked (GlcNAc...) asparagine glycosylation sites follow: N298, N304, N340, N350, N381, N432, N442, N455, and N538. Positions 347 to 393 (LFHNVTAGDDCGTIGLKYSISLDDFIFLNSMIWPNCTNLWLRASYCV) constitute a LysM 3 domain. Low complexity predominate over residues 605–629 (SPITSSAPTSTTASSKTSSSAAQPT). A disordered region spans residues 605–637 (SPITSSAPTSTTASSKTSSSAAQPTNVSTDGTC). A glycan (N-linked (GlcNAc...) asparagine) is linked at N630. Chitin-binding type-1 domains follow at residues 634-680 (DGTC…KCDA) and 688-733 (DGTC…GVCT). Disulfide bonds link C637–C654, C645–C660, C653–C667, C671–C678, C691–C708, C699–C714, C707–C721, and C725–C732.

The protein belongs to the secreted LysM effector family.

The protein localises to the secreted. Its subcellular location is the cell membrane. It localises to the vacuole. In terms of biological role, secreted effector that enables the plant pathogenic fungus to manipulate host defenses for successful infection. Not involved in host recognition and penetration but suppresses host cell death and promotes fumonisin biosynthesis while the pathogen colonizes maize kernels. The sequence is that of Non-secreted LysM effector LCP1 from Gibberella moniliformis (strain M3125 / FGSC 7600) (Maize ear and stalk rot fungus).